We begin with the raw amino-acid sequence, 258 residues long: 1-(5-phosphoribosyl)-5-[(5-phosphoribosylamino)methylideneamino] imidazole-4-carboxamide isomerase (258 aa).

The active-site Proton acceptor is Asp-9. Asp-131 serves as the catalytic Proton donor.

Belongs to the HisA/HisF family.

It is found in the cytoplasm. The catalysed reaction is 1-(5-phospho-beta-D-ribosyl)-5-[(5-phospho-beta-D-ribosylamino)methylideneamino]imidazole-4-carboxamide = 5-[(5-phospho-1-deoxy-D-ribulos-1-ylimino)methylamino]-1-(5-phospho-beta-D-ribosyl)imidazole-4-carboxamide. Its pathway is amino-acid biosynthesis; L-histidine biosynthesis; L-histidine from 5-phospho-alpha-D-ribose 1-diphosphate: step 4/9. The protein is 1-(5-phosphoribosyl)-5-[(5-phosphoribosylamino)methylideneamino] imidazole-4-carboxamide isomerase of Salinibacter ruber (strain DSM 13855 / M31).